Reading from the N-terminus, the 497-residue chain is 3-octaprenyl-4-hydroxybenzoate carboxy-lyase (497 aa).

Residue N172 coordinates Mn(2+). Residues 175 to 177, 189 to 191, and 194 to 195 each bind prenylated FMN; these read IYR, RWL, and RG. E238 provides a ligand contact to Mn(2+). D287 functions as the Proton donor in the catalytic mechanism.

The protein belongs to the UbiD family. In terms of assembly, homohexamer. Requires prenylated FMN as cofactor. Mn(2+) serves as cofactor.

It localises to the cell membrane. The enzyme catalyses a 4-hydroxy-3-(all-trans-polyprenyl)benzoate + H(+) = a 2-(all-trans-polyprenyl)phenol + CO2. It participates in cofactor biosynthesis; ubiquinone biosynthesis. Catalyzes the decarboxylation of 3-octaprenyl-4-hydroxy benzoate to 2-octaprenylphenol, an intermediate step in ubiquinone biosynthesis. This chain is 3-octaprenyl-4-hydroxybenzoate carboxy-lyase, found in Enterobacter sp. (strain 638).